The chain runs to 281 residues: MEMO1 family protein APE_1771 (281 aa).

It belongs to the MEMO1 family.

This chain is MEMO1 family protein APE_1771, found in Aeropyrum pernix (strain ATCC 700893 / DSM 11879 / JCM 9820 / NBRC 100138 / K1).